The following is a 424-amino-acid chain: N-succinylarginine dihydrolase (424 aa).

Residues 19–28, Asn110, and 137–138 contribute to the substrate site; these read AGLSPGNIAS and HR. Glu174 is a catalytic residue. Arg207 lines the substrate pocket. His240 is a catalytic residue. Substrate contacts are provided by Asp242 and Asn349. Cys355 acts as the Nucleophile in catalysis.

It belongs to the succinylarginine dihydrolase family. As to quaternary structure, homodimer.

It carries out the reaction N(2)-succinyl-L-arginine + 2 H2O + 2 H(+) = N(2)-succinyl-L-ornithine + 2 NH4(+) + CO2. Its pathway is amino-acid degradation; L-arginine degradation via AST pathway; L-glutamate and succinate from L-arginine: step 2/5. Functionally, catalyzes the hydrolysis of N(2)-succinylarginine into N(2)-succinylornithine, ammonia and CO(2). The polypeptide is N-succinylarginine dihydrolase (Rhizorhabdus wittichii (strain DSM 6014 / CCUG 31198 / JCM 15750 / NBRC 105917 / EY 4224 / RW1) (Sphingomonas wittichii)).